The following is a 494-amino-acid chain: Aspartyl/glutamyl-tRNA(Asn/Gln) amidotransferase subunit B (494 aa).

Belongs to the GatB/GatE family. GatB subfamily. As to quaternary structure, heterotrimer of A, B and C subunits.

It catalyses the reaction L-glutamyl-tRNA(Gln) + L-glutamine + ATP + H2O = L-glutaminyl-tRNA(Gln) + L-glutamate + ADP + phosphate + H(+). It carries out the reaction L-aspartyl-tRNA(Asn) + L-glutamine + ATP + H2O = L-asparaginyl-tRNA(Asn) + L-glutamate + ADP + phosphate + 2 H(+). In terms of biological role, allows the formation of correctly charged Asn-tRNA(Asn) or Gln-tRNA(Gln) through the transamidation of misacylated Asp-tRNA(Asn) or Glu-tRNA(Gln) in organisms which lack either or both of asparaginyl-tRNA or glutaminyl-tRNA synthetases. The reaction takes place in the presence of glutamine and ATP through an activated phospho-Asp-tRNA(Asn) or phospho-Glu-tRNA(Gln). This chain is Aspartyl/glutamyl-tRNA(Asn/Gln) amidotransferase subunit B, found in Rhizorhabdus wittichii (strain DSM 6014 / CCUG 31198 / JCM 15750 / NBRC 105917 / EY 4224 / RW1) (Sphingomonas wittichii).